The following is a 125-amino-acid chain: Large ribosomal subunit protein bL12 (125 aa).

Belongs to the bacterial ribosomal protein bL12 family. In terms of assembly, homodimer. Part of the ribosomal stalk of the 50S ribosomal subunit. Forms a multimeric L10(L12)X complex, where L10 forms an elongated spine to which 2 to 4 L12 dimers bind in a sequential fashion. Binds GTP-bound translation factors.

In terms of biological role, forms part of the ribosomal stalk which helps the ribosome interact with GTP-bound translation factors. Is thus essential for accurate translation. The protein is Large ribosomal subunit protein bL12 of Rhizobium leguminosarum bv. trifolii (strain WSM2304).